The following is a 451-amino-acid chain: 3-phosphoshikimate 1-carboxyvinyltransferase (451 aa).

Residues K38, S39, and R43 each coordinate 3-phosphoshikimate. Residue K38 coordinates phosphoenolpyruvate. Phosphoenolpyruvate is bound by residues G111 and R140. S185, Q187, D335, and K362 together coordinate 3-phosphoshikimate. Phosphoenolpyruvate is bound at residue Q187. The Proton acceptor role is filled by D335. The phosphoenolpyruvate site is built by R366 and R408.

The protein belongs to the EPSP synthase family. As to quaternary structure, monomer.

The protein resides in the cytoplasm. The enzyme catalyses 3-phosphoshikimate + phosphoenolpyruvate = 5-O-(1-carboxyvinyl)-3-phosphoshikimate + phosphate. It functions in the pathway metabolic intermediate biosynthesis; chorismate biosynthesis; chorismate from D-erythrose 4-phosphate and phosphoenolpyruvate: step 6/7. Its function is as follows. Catalyzes the transfer of the enolpyruvyl moiety of phosphoenolpyruvate (PEP) to the 5-hydroxyl of shikimate-3-phosphate (S3P) to produce enolpyruvyl shikimate-3-phosphate and inorganic phosphate. The protein is 3-phosphoshikimate 1-carboxyvinyltransferase of Crocosphaera subtropica (strain ATCC 51142 / BH68) (Cyanothece sp. (strain ATCC 51142)).